We begin with the raw amino-acid sequence, 625 residues long: MATEINMPMGPGPLGEAGSLKIDTGSNMEVSIPSPVSAAPGELNETPSPSTPANPNSASRRPPRKSTLTQQQKNQKRQRATQDQLTTLEQEFAKNPTPTATVRDRIAEEINMTERSVQIWFQNRRAKIKLMAKKSLETGEDIDSIPESMRTYLAMQAMESGKGFPGAFLGRGMMPYGHGNMLMAGEQGGPSKVVIHHLTCRSLSIGKWTRVGQNTMDLIVFYSPDKCTMTYYINNEQAGYKIEYHFSCIKSICVENADDPTKVGGIVIELNRPPSFFMDQSPTSNGFFQCGDFTEDQQASQCLVHHLGGNPKVLSGQLAKLVSLESFMNRHNTMAYHPDPMAHGGMPVSAPVSPTNRPSSQPNFAQPHVGLFQESQWGISPAHHVMRGPGHKRQRSRSVPIAVDFSMLQTPMPSFYIQHPGEAQPQPHSPNIYAPVPQQPHALSPAGPGLRIDTQAGFGLDMRQYPMSATTAPSPSEYNSPSFFSQAPENTPLPASNFNTPYSSTFLSPMMNATNLNVPQSVSPISFSGGDPAIVDQSPPMSMLGRSASADIYHGGDSSAISDDGHSLNDMYSKHAITLPMHPPHSPAFVEPSQAELDMNQLVQFDTVDPSSLSPESVHQGIGGQ.

Disordered stretches follow at residues 1-83 (MATE…ATQD) and 466-496 (PMSA…LPAS). Over residues 46–59 (TPSPSTPANPNSAS) the composition is skewed to low complexity. The homeobox DNA-binding region spans 73 to 132 (KNQKRQRATQDQLTTLEQEFAKNPTPTATVRDRIAEEINMTERSVQIWFQNRRAKIKLMA). Residues 467–496 (MSATTAPSPSEYNSPSFFSQAPENTPLPAS) are compositionally biased toward polar residues.

It localises to the nucleus. Functionally, transcriptional regulator; part of the gene cluster that mediates the biosynthesis of pyriculol and pyriculariol, two heptaketides that induce lesion formation upon application on rice leaves but are dispensable for pathogenicity. With TRF1, negatively regulates the expression of the gene cluster and the subsequent pyriculol and pyriculariol production. This Pyricularia oryzae (strain 70-15 / ATCC MYA-4617 / FGSC 8958) (Rice blast fungus) protein is Pyriculol/pyriculariol biosynthesis cluster transcription factor 1.